Consider the following 496-residue polypeptide: Matrilin-1 (496 aa).

The first 22 residues, 1 to 22, serve as a signal peptide directing secretion; the sequence is MRVLSGTSLMLCSLLLLLQALC. The 200-residue stretch at 23–222 folds into the VWFA 1 domain; that stretch reads SPGLAPQSRG…SRKFQEAFCV (200 aa). Asn-76 is a glycosylation site (N-linked (GlcNAc...) asparagine). The EGF-like domain maps to 223-263; it reads VSDLCATGDHDCEQVCISSPGSYTCACHEGFTLNSDGKTCN. Intrachain disulfides connect Cys-227–Cys-238, Cys-234–Cys-247, and Cys-249–Cys-262. The 190-residue stretch at 264–453 folds into the VWFA 2 domain; the sequence is VCSGGGGSSA…GKKLQKKICV (190 aa). Asn-344 is a glycosylation site (N-linked (GalNAc...) asparagine). A coiled-coil region spans residues 467–495; sequence QAKVEGLLQALTRKLEAVSKRLAILENTV.

Homotrimer. Part of a complex composed of MATN1 (via VWFA1 domain), type 2 collagens and type 6 collagens. Forms a complex (via covalent bonds) with ACAN; the interaction increases in abundance with increasing age of the organism via an increase in occupancy of MATN1 binding sites. Interacts with COMP. In terms of processing, N-glycosylated; reduces binding affinity for type 2 collagens.

It localises to the secreted. The protein resides in the extracellular space. It is found in the extracellular matrix. In terms of biological role, a major component of the extracellular matrix of non-articular cartilage. Binds to type 2 collagens and forms long concatenated protein networks as part of the extracellular matrix. Required for the network-like organization and bundling of collagen fibrils surrounding chondrocytes in the zones of maturation and hypertrophy. Required for mechanotransduction and adaption to mechanical loading in cartilage chondrocytes, resulting in an increase in expression of the extracellular matrix components ACAN and COL2A1. Acts as a moderator of angiogenesis in response to injury. This Homo sapiens (Human) protein is Matrilin-1.